We begin with the raw amino-acid sequence, 255 residues long: Developmental and secondary metabolism regulator MVE1 (255 aa).

Residues 31–226 (GRKLTYRMSV…AEQGCRVRIR (196 aa)) enclose the Velvet domain. A Nuclear localization signal motif is present at residues 45–50 (VRARAC). Disordered regions lie at residues 163–184 (CKSP…DAHV) and 229–255 (VRMR…QARA). Over residues 245–255 (NYEDETAQARA) the composition is skewed to acidic residues.

Belongs to the velvet family. VeA subfamily. Component of the heterotrimeric velvet complex composed of LAE1, MVE1 and VEL2; MVE1 acting as a bridging protein between LAE1 and VEL2.

The protein localises to the nucleus. Its subcellular location is the cytoplasm. In terms of biological role, component of the velvet transcription factor complex that controls sexual/asexual developmental ratio in response to light, promoting sexual development in the darkness while stimulating asexual sporulation under illumination. The velvet complex hat acts as a global regulator for secondary metabolite gene expression. Controls the expression of the melanin gene cluster. Mediates the light-stimulated formation of aerial mycelia. The sequence is that of Developmental and secondary metabolism regulator MVE1 from Zymoseptoria tritici (strain CBS 115943 / IPO323) (Speckled leaf blotch fungus).